Reading from the N-terminus, the 496-residue chain is MEPFLRKRLTFLSFFWDKIWPADESEEDIPRIQGHDDNPVPEQAAAVEPCSFPAPRARLFRALYDFTARCAEELSVSRGDRLYALKEEGDYIFAQRLSGPPSTGLVPVTYLAKATPEPPSDQPWYFSGISRAQAQQLLLSPANAPGAFLIRPSESSIGGYSLSVRAQAKVCHYRICMAPSGSLYLQEGQLFPSLDALLAYYKTNWKLIQNPLLQPCIPQIPLVQDEWERPRSEFVLRRKLGEGFFGEVWEGLWLGSIPVAVKVIKSADMKLADLTKEIEALKSLRHERLIRLHAICSLGEPVYIVTELMGKGNLQVYLGSSEGKALSLPHLLGFACQVAEGMSYLEERRVVHRDLAARNVLVGDDLTCKVADFGLARLLKDDVYSPSSGSKIPVKWTAPEAANYRVFSQKSDVWSFGILLYEVFTYGQCPYEGMTNHETLQQISRGYRLPRPAVCPAEVYVLMVECWKGSPEERPTFAILREKLNAINRRLHLGLT.

The SH3 domain maps to 55–116; that stretch reads PRARLFRALY…PVTYLAKATP (62 aa). Positions 124–216 constitute an SH2 domain; it reads WYFSGISRAQ…LIQNPLLQPC (93 aa). Positions 234–495 constitute a Protein kinase domain; sequence FVLRRKLGEG…AINRRLHLGL (262 aa). ATP contacts are provided by residues 240–248 and lysine 262; that span reads LGEGFFGEV. The active-site Proton acceptor is the aspartate 354. Position 384 is a phosphotyrosine; by autocatalysis (tyrosine 384).

This sequence belongs to the protein kinase superfamily. Tyr protein kinase family. SRC subfamily. As to quaternary structure, interacts (via the SH2 and SH3 domains) with DOK1. Interacts with KHDRBS1/SAM68 and VIM. In terms of tissue distribution, higher expression in liver, lung, thymus and skin than in brain, kidney, heart and spleen. In skin, highly expressed in keratinocytes. Abundant in lung, liver, spleen, kidney and testis and is also detected in the cerebrum.

It localises to the cytoplasm. It carries out the reaction L-tyrosyl-[protein] + ATP = O-phospho-L-tyrosyl-[protein] + ADP + H(+). Its function is as follows. Non-receptor tyrosine-protein kinase which phosphorylates DOK1 on tyrosine residues. Also phosphorylates KHDRBS1/SAM68 and VIM on tyrosine residues. Phosphorylation of KHDRBS1 is EGF-dependent. Phosphorylates OTUB1, promoting deubiquitination of RPTOR. The chain is Tyrosine-protein kinase Srms (Srms) from Mus musculus (Mouse).